Consider the following 648-residue polypeptide: Rho GTPase-activating protein 25 (648 aa).

In terms of domain architecture, PH spans 46-151 (RPIKVGWLKK…WVKFLRRVAG (106 aa)). The Rho-GAP domain maps to 160–354 (QRLDETVAYE…MMIRDHEVLF (195 aa)). Residues 356–559 (KSKDAPISPP…DLDSLQRTVQ (204 aa)) are disordered. Phosphoserine is present on residues Ser363, Ser396, and Ser403. The span at 393-410 (RTDSFSNTASSPDATSPT) shows a compositional bias: polar residues. The residue at position 407 (Thr407) is a Phosphothreonine. Basic and acidic residues predominate over residues 417 to 431 (QHQEDSGKAPRENPG). 2 stretches are compositionally biased toward polar residues: residues 453-462 (SAFQGTTSSK) and 497-515 (DQRT…SQGN). Ser537 carries the post-translational modification Phosphoserine. Positions 540–641 (EAGSKNSGED…VKEFVKSMEK (102 aa)) form a coiled coil.

Functionally, GTPase activator for the Rho-type GTPases by converting them to an inactive GDP-bound state. This is Rho GTPase-activating protein 25 (Arhgap25) from Mus musculus (Mouse).